We begin with the raw amino-acid sequence, 101 residues long: Small ribosomal subunit protein uS10 (101 aa).

It belongs to the universal ribosomal protein uS10 family. In terms of assembly, part of the 30S ribosomal subunit.

In terms of biological role, involved in the binding of tRNA to the ribosomes. The sequence is that of Small ribosomal subunit protein uS10 from Flavobacterium psychrophilum (strain ATCC 49511 / DSM 21280 / CIP 103535 / JIP02/86).